Consider the following 190-residue polypeptide: Potassium-transporting ATPase KdpC subunit (190 aa).

A helical transmembrane segment spans residues 10–30 (TFIFLLLITGGVYPLLTTALG).

Belongs to the KdpC family. In terms of assembly, the system is composed of three essential subunits: KdpA, KdpB and KdpC.

It localises to the cell inner membrane. Part of the high-affinity ATP-driven potassium transport (or Kdp) system, which catalyzes the hydrolysis of ATP coupled with the electrogenic transport of potassium into the cytoplasm. This subunit acts as a catalytic chaperone that increases the ATP-binding affinity of the ATP-hydrolyzing subunit KdpB by the formation of a transient KdpB/KdpC/ATP ternary complex. The chain is Potassium-transporting ATPase KdpC subunit from Escherichia coli O157:H7.